The primary structure comprises 812 residues: Valine--tRNA ligase (812 aa).

The short motif at 46-56 (PTVSGQLHIGH) is the 'HIGH' region element. The 'KMSKS' region motif lies at 536 to 540 (KMSKS). ATP is bound at residue Lys539.

This sequence belongs to the class-I aminoacyl-tRNA synthetase family. ValS type 2 subfamily. Monomer.

Its subcellular location is the cytoplasm. It catalyses the reaction tRNA(Val) + L-valine + ATP = L-valyl-tRNA(Val) + AMP + diphosphate. Its function is as follows. Catalyzes the attachment of valine to tRNA(Val). As ValRS can inadvertently accommodate and process structurally similar amino acids such as threonine, to avoid such errors, it has a 'posttransfer' editing activity that hydrolyzes mischarged Thr-tRNA(Val) in a tRNA-dependent manner. This Rickettsia akari (strain Hartford) protein is Valine--tRNA ligase.